Here is a 376-residue protein sequence, read N- to C-terminus: Lipid-A-disaccharide synthase (376 aa).

The protein belongs to the LpxB family.

It carries out the reaction a lipid X + a UDP-2-N,3-O-bis[(3R)-3-hydroxyacyl]-alpha-D-glucosamine = a lipid A disaccharide + UDP + H(+). Its pathway is bacterial outer membrane biogenesis; LPS lipid A biosynthesis. Its function is as follows. Condensation of UDP-2,3-diacylglucosamine and 2,3-diacylglucosamine-1-phosphate to form lipid A disaccharide, a precursor of lipid A, a phosphorylated glycolipid that anchors the lipopolysaccharide to the outer membrane of the cell. The polypeptide is Lipid-A-disaccharide synthase (Hydrogenovibrio crunogenus (strain DSM 25203 / XCL-2) (Thiomicrospira crunogena)).